We begin with the raw amino-acid sequence, 1017 residues long: Nonsense-mediated mRNA decay factor SMG5 (1017 aa).

At Ser2 the chain carries N-acetylserine. Residues Ser2 and Ser423 each carry the phosphoserine modification. Disordered stretches follow at residues Gly406–Ala562 and Thr597–Glu640. Over residues Lys448–Pro467 the composition is skewed to basic residues. The span at Asp486–Ser496 shows a compositional bias: low complexity. Over residues Ala620 to Gly629 the composition is skewed to acidic residues. A coiled-coil region spans residues Ala798 to Glu842. The PINc domain maps to Arg873 to Ala996.

As to quaternary structure, interacts with TERT, PPP2CA and SMG1. Part of a complex that contains SMG1, SMG5, SMG7, PPP2CA, a short isoform of UPF3A (isoform UPF3AS, but not isoform UPF3AL) and phosphorylated UPF1. Not detected in complexes that contain unphosphorylated UPF1.

The protein localises to the cytoplasm. Its subcellular location is the nucleus. Its function is as follows. Plays a role in nonsense-mediated mRNA decay. Does not have RNase activity by itself. Promotes dephosphorylation of UPF1. Together with SMG7 is thought to provide a link to the mRNA degradation machinery involving exonucleolytic pathways, and to serve as an adapter for UPF1 to protein phosphatase 2A (PP2A), thereby triggering UPF1 dephosphorylation. Necessary for TERT activity. The sequence is that of Nonsense-mediated mRNA decay factor SMG5 from Mus musculus (Mouse).